Reading from the N-terminus, the 217-residue chain is Uracil-DNA glycosylase (217 aa).

The active-site Proton acceptor is Asp-62.

The protein belongs to the uracil-DNA glycosylase (UDG) superfamily. UNG family.

It is found in the cytoplasm. The enzyme catalyses Hydrolyzes single-stranded DNA or mismatched double-stranded DNA and polynucleotides, releasing free uracil.. Its function is as follows. Excises uracil residues from the DNA which can arise as a result of misincorporation of dUMP residues by DNA polymerase or due to deamination of cytosine. The polypeptide is Uracil-DNA glycosylase (Streptococcus pyogenes serotype M4 (strain MGAS10750)).